Consider the following 212-residue polypeptide: Adenylate kinase (212 aa).

10–15 provides a ligand contact to ATP; it reads GAGKGT. Positions 30–59 are NMP; sequence STGDMFRAAMANQTEMGVLAKSYIDKGELV. AMP is bound by residues threonine 31, arginine 36, 57–59, 86–89, and glutamine 93; these read ELV and GYPR. Positions 127 to 159 are LID; that stretch reads GRIIHRVTGETFHKVFNPPVDYKEEDYYQREDD. ATP is bound by residues arginine 128 and 137–138; that span reads TF. The AMP site is built by arginine 156 and arginine 167. Residue glutamine 195 participates in ATP binding.

It belongs to the adenylate kinase family. In terms of assembly, monomer.

The protein resides in the cytoplasm. The catalysed reaction is AMP + ATP = 2 ADP. It functions in the pathway purine metabolism; AMP biosynthesis via salvage pathway; AMP from ADP: step 1/1. In terms of biological role, catalyzes the reversible transfer of the terminal phosphate group between ATP and AMP. Plays an important role in cellular energy homeostasis and in adenine nucleotide metabolism. This is Adenylate kinase from Streptococcus pneumoniae (strain JJA).